Here is a 349-residue protein sequence, read N- to C-terminus: GDP-mannose:glycolipid 4-beta-D-mannosyltransferase (349 aa).

The signal sequence occupies residues 1 to 14 (MSASASLPVTRAAA).

Belongs to the glycosyltransferase 94 family.

It is found in the cell inner membrane. The enzyme catalyses beta-D-GlcA-(1-&gt;2)-alpha-D-Man-(1-&gt;3)-beta-D-Glc-(1-&gt;4)-alpha-D-Glc-di-trans,octa-cis-undecaprenyl diphosphate + GDP-alpha-D-mannose = beta-D-Man-(1-&gt;4)-beta-D-GlcA-(1-&gt;2)-alpha-D-Man-(1-&gt;3)-beta-D-Glc-(1-&gt;4)-alpha-D-Glc-di-trans,octa-cis-undecaprenyl diphosphate + GDP + H(+). It participates in glycan biosynthesis; xanthan biosynthesis. In terms of biological role, nonprocessive beta-mannosyltransferase that catalyzes the transfer of a mannose residue from GDP-mannose to glucuronic acid-beta-1,2-mannose-alpha-1,3-glucose-beta-1,4-glucose-PP-polyisoprenyl to form the lipid-linked pentasaccharide repeating unit of xanthan, Man-GlcA-Man-Glc(2)-PP-Pol. Is involved in the biosynthesis of the exopolysaccharide xanthan. To a lesser extent, can also use ADP-Man and even GDP-Glc as sugar donor substrates in vitro. Is unable to transfer a Man residue to the free-tetrasaccharide GlcA-Man-Glc(2) used as an acceptor, which indicates that the diphosphate group and the lipid moiety in the acceptor substrate are of major importance for acceptor binding and catalysis. The protein is GDP-mannose:glycolipid 4-beta-D-mannosyltransferase (gumI) of Xanthomonas campestris pv. campestris.